The chain runs to 668 residues: COBRA-like protein 11 (668 aa).

Positions 1–29 are cleaved as a signal peptide; that stretch reads MKKLRYVHLNLLLLLLPLINLQFPTLSLA. N-linked (GlcNAc...) asparagine glycans are attached at residues Asn69, Asn125, Asn254, Asn318, Asn329, Asn358, Asn412, Asn432, Asn473, Asn552, Asn560, and Asn579. A lipid anchor (GPI-anchor amidated serine) is attached at Ser636. A propeptide spans 637 to 668 (removed in mature form); sequence SGMRLSGIRFLPSILLAITTFHAITDRLLTGV.

Belongs to the COBRA family. Mostly expressed in flowers, stamen, anthers and pollen, and, to a lower extent, possibly in roots, stems, leaves and siliques.

The protein resides in the cell membrane. Involved in the deposition of apical pectin cap and cellulose microfibrils in pollen tubes. Implicated in pollen tubes growth in the female transmitting tract of pistil and toward micropyles, via the perception of ovule guidance cues. This is COBRA-like protein 11 from Arabidopsis thaliana (Mouse-ear cress).